We begin with the raw amino-acid sequence, 235 residues long: Methylosome subunit pICln (235 aa).

Residues 1–21 (MSFLKSFPPPGSAEGLRQQQP) form a disordered region. Ser-2 is modified (N-acetylserine). Ser-100, Ser-142, Ser-191, Ser-193, Ser-196, and Ser-208 each carry phosphoserine. Residues 133–157 (LHPDPEDEDSDDYDGEEYDVEAHEQ) form a disordered region. Acidic residues predominate over residues 137–151 (PEDEDSDDYDGEEYD). The interval 195-217 (SSQYNMAGVRTEDSTRDYEDGME) is disordered. Basic and acidic residues predominate over residues 204–213 (RTEDSTRDYE). Thr-221 bears the Phosphothreonine mark.

Belongs to the pICln (TC 1.A.47) family. In terms of assembly, component of the methylosome, a 20S complex containing at least PRMT5/SKB1, WDR77/MEP50 and CLNS1A/pICln. May mediate SNRPD1 and SNRPD3 methylation. Forms a 6S pICln-Sm complex composed of CLNS1A/pICln, SNRPD1, SNRPD2, SNRPE, SNRPF and SNRPG; ring-like structure where CLNS1A/pICln mimics additional Sm proteins and which is unable to assemble into the core snRNP. Interacts with LSM10 and LSM11.

It localises to the cytoplasm. It is found in the cytosol. The protein resides in the nucleus. The protein localises to the cytoskeleton. Functionally, involved in both the assembly of spliceosomal snRNPs and the methylation of Sm proteins. Chaperone that regulates the assembly of spliceosomal U1, U2, U4 and U5 small nuclear ribonucleoproteins (snRNPs), the building blocks of the spliceosome, and thereby plays an important role in the splicing of cellular pre-mRNAs. Most spliceosomal snRNPs contain a common set of Sm proteins SNRPB, SNRPD1, SNRPD2, SNRPD3, SNRPE, SNRPF and SNRPG that assemble in a heptameric protein ring on the Sm site of the small nuclear RNA to form the core snRNP (Sm core). In the cytosol, the Sm proteins SNRPD1, SNRPD2, SNRPE, SNRPF and SNRPG are trapped in an inactive 6S pICln-Sm complex by the chaperone CLNS1A that controls the assembly of the core snRNP. Dissociation by the SMN complex of CLNS1A from the trapped Sm proteins and their transfer to an SMN-Sm complex triggers the assembly of core snRNPs and their transport to the nucleus. The polypeptide is Methylosome subunit pICln (CLNS1A) (Canis lupus familiaris (Dog)).